A 365-amino-acid polypeptide reads, in one-letter code: Cobalt-precorrin-5B C(1)-methyltransferase (365 aa).

It belongs to the CbiD family.

The enzyme catalyses Co-precorrin-5B + S-adenosyl-L-methionine = Co-precorrin-6A + S-adenosyl-L-homocysteine. It functions in the pathway cofactor biosynthesis; adenosylcobalamin biosynthesis; cob(II)yrinate a,c-diamide from sirohydrochlorin (anaerobic route): step 6/10. In terms of biological role, catalyzes the methylation of C-1 in cobalt-precorrin-5B to form cobalt-precorrin-6A. This Methanococcus maripaludis (strain C5 / ATCC BAA-1333) protein is Cobalt-precorrin-5B C(1)-methyltransferase.